The primary structure comprises 208 residues: Protein-L-isoaspartate O-methyltransferase (208 aa).

S59 is a catalytic residue.

It belongs to the methyltransferase superfamily. L-isoaspartyl/D-aspartyl protein methyltransferase family.

It is found in the cytoplasm. It catalyses the reaction [protein]-L-isoaspartate + S-adenosyl-L-methionine = [protein]-L-isoaspartate alpha-methyl ester + S-adenosyl-L-homocysteine. Its function is as follows. Catalyzes the methyl esterification of L-isoaspartyl residues in peptides and proteins that result from spontaneous decomposition of normal L-aspartyl and L-asparaginyl residues. It plays a role in the repair and/or degradation of damaged proteins. In Vibrio atlanticus (strain LGP32) (Vibrio splendidus (strain Mel32)), this protein is Protein-L-isoaspartate O-methyltransferase.